The chain runs to 689 residues: DNA ligase (689 aa).

NAD(+)-binding positions include 40–44, 89–90, and E121; these read DAEYD and SL. The active-site N6-AMP-lysine intermediate is K123. 4 residues coordinate NAD(+): R144, E179, K295, and K319. Zn(2+)-binding residues include C413, C416, C431, and C437. The 80-residue stretch at 610-689 folds into the BRCT domain; that stretch reads REQSSLTGKI…AEWLTLVRDI (80 aa).

Belongs to the NAD-dependent DNA ligase family. LigA subfamily. Mg(2+) is required as a cofactor. Requires Mn(2+) as cofactor.

The catalysed reaction is NAD(+) + (deoxyribonucleotide)n-3'-hydroxyl + 5'-phospho-(deoxyribonucleotide)m = (deoxyribonucleotide)n+m + AMP + beta-nicotinamide D-nucleotide.. Functionally, DNA ligase that catalyzes the formation of phosphodiester linkages between 5'-phosphoryl and 3'-hydroxyl groups in double-stranded DNA using NAD as a coenzyme and as the energy source for the reaction. It is essential for DNA replication and repair of damaged DNA. This Rickettsia bellii (strain RML369-C) protein is DNA ligase.